We begin with the raw amino-acid sequence, 466 residues long: Exodeoxyribonuclease 7 large subunit (466 aa).

This sequence belongs to the XseA family. Heterooligomer composed of large and small subunits.

The protein resides in the cytoplasm. The enzyme catalyses Exonucleolytic cleavage in either 5'- to 3'- or 3'- to 5'-direction to yield nucleoside 5'-phosphates.. In terms of biological role, bidirectionally degrades single-stranded DNA into large acid-insoluble oligonucleotides, which are then degraded further into small acid-soluble oligonucleotides. The protein is Exodeoxyribonuclease 7 large subunit of Vesicomyosocius okutanii subsp. Calyptogena okutanii (strain HA).